Reading from the N-terminus, the 801-residue chain is Transferrin receptor protein 2 (801 aa).

The Cytoplasmic portion of the chain corresponds to 1–83 (MERLWGLFQR…WAAAGRRAAP (83 aa)). Positions 16-45 (PRSSQTVYQRVEGPRKGHLEEEEEDGEEGA) are disordered. An Endocytosis signal motif is present at residues 23-26 (YQRV). Residues 35–45 (EEEEEDGEEGA) show a composition bias toward acidic residues. The helical; Signal-anchor for type II membrane protein transmembrane segment at 84-104 (YLVLTALLIFTGAFLLGYVAF) threads the bilayer. Over 105–801 (RGSCQACGDS…GDVWNIDNNF (697 aa)) the chain is Extracellular. Asn240, Asn339, Asn540, and Asn754 each carry an N-linked (GlcNAc...) asparagine glycan.

Belongs to the peptidase M28 family. M28B subfamily. As to quaternary structure, homodimer. As to expression, predominantly expressed in liver. While the alpha form is also expressed in spleen, lung, muscle, prostate and peripheral blood mononuclear cells, the beta form is expressed in all tissues tested, albeit weakly.

It is found in the cell membrane. It localises to the cytoplasm. Mediates cellular uptake of transferrin-bound iron in a non-iron dependent manner. May be involved in iron metabolism, hepatocyte function and erythrocyte differentiation. This is Transferrin receptor protein 2 (TFR2) from Homo sapiens (Human).